The following is a 348-amino-acid chain: tRNA pseudouridine synthase D (348 aa).

Asp-78 (nucleophile) is an active-site residue. The TRUD domain maps to 150–304 (GLPNFFGPQR…AEGTRRAARL (155 aa)).

The protein belongs to the pseudouridine synthase TruD family.

It catalyses the reaction uridine(13) in tRNA = pseudouridine(13) in tRNA. Responsible for synthesis of pseudouridine from uracil-13 in transfer RNAs. The protein is tRNA pseudouridine synthase D of Anaeromyxobacter dehalogenans (strain 2CP-1 / ATCC BAA-258).